A 166-amino-acid polypeptide reads, in one-letter code: Putative peroxiredoxin (166 aa).

In terms of domain architecture, Thioredoxin spans 1–166 (EIGSTIPNAT…SSAATVLSKL (166 aa)). The Cysteine sulfenic acid (-SOH) intermediate role is filled by Cys56. Positions 164-166 (SKL) match the Microbody targeting signal motif.

The protein belongs to the peroxiredoxin family. Prx5 subfamily. As to quaternary structure, homodimer; disulfide-linked, upon oxidation.

It carries out the reaction a hydroperoxide + [thioredoxin]-dithiol = an alcohol + [thioredoxin]-disulfide + H2O. In terms of biological role, thiol-specific peroxidase that catalyzes the reduction of hydrogen peroxide and organic hydroperoxides to water and alcohols, respectively. Plays a role in cell protection against oxidative stress by detoxifying peroxides and as sensor of hydrogen peroxide-mediated signaling events. In Malassezia furfur (Pityriasis versicolor infection agent), this protein is Putative peroxiredoxin.